Consider the following 580-residue polypeptide: Glutamine--tRNA ligase (580 aa).

A 'HIGH' region motif is present at residues 51–61; the sequence is PEPNGYLHIGH. Residues 52–54 and 58–64 each bind ATP; these read EPN and HIGHAKS. 2 residues coordinate L-glutamine: aspartate 84 and tyrosine 233. ATP is bound by residues threonine 252 and 287–288; that span reads RL. Residues 294–298 carry the 'KMSKS' region motif; that stretch reads ITSKR.

Belongs to the class-I aminoacyl-tRNA synthetase family. Monomer.

The protein localises to the cytoplasm. It catalyses the reaction tRNA(Gln) + L-glutamine + ATP = L-glutaminyl-tRNA(Gln) + AMP + diphosphate. The protein is Glutamine--tRNA ligase of Ralstonia nicotianae (strain ATCC BAA-1114 / GMI1000) (Ralstonia solanacearum).